Here is a 117-residue protein sequence, read N- to C-terminus: Immunoglobulin heavy variable 1-24 (117 aa).

An N-terminal signal peptide occupies residues 1 to 19 (MDCTWRILFLVAAATGTHA). Residues 20-44 (QVQLVQSGAEVKKPGASVKVSCKVS) form a framework-1 region. In terms of domain architecture, Ig-like spans 20–117 (QVQLVQSGAE…EDTAVYYCAT (98 aa)). C41 and C115 are disulfide-bonded. The segment at 45 to 52 (GYTLTELS) is complementarity-determining-1. Positions 53–69 (MHWVRQAPGKGLEWMGG) are framework-2. Residues 70-77 (FDPEDGET) are complementarity-determining-2. The interval 78–115 (IYAQKFQGRVTMTEDTSTDTAYMELSSLRSEDTAVYYC) is framework-3. The tract at residues 116–117 (AT) is complementarity-determining-3.

Immunoglobulins are composed of two identical heavy chains and two identical light chains; disulfide-linked.

The protein localises to the secreted. It localises to the cell membrane. Its function is as follows. V region of the variable domain of immunoglobulin heavy chains that participates in the antigen recognition. Immunoglobulins, also known as antibodies, are membrane-bound or secreted glycoproteins produced by B lymphocytes. In the recognition phase of humoral immunity, the membrane-bound immunoglobulins serve as receptors which, upon binding of a specific antigen, trigger the clonal expansion and differentiation of B lymphocytes into immunoglobulins-secreting plasma cells. Secreted immunoglobulins mediate the effector phase of humoral immunity, which results in the elimination of bound antigens. The antigen binding site is formed by the variable domain of one heavy chain, together with that of its associated light chain. Thus, each immunoglobulin has two antigen binding sites with remarkable affinity for a particular antigen. The variable domains are assembled by a process called V-(D)-J rearrangement and can then be subjected to somatic hypermutations which, after exposure to antigen and selection, allow affinity maturation for a particular antigen. The chain is Immunoglobulin heavy variable 1-24 from Homo sapiens (Human).